Consider the following 236-residue polypeptide: Ubiquinone biosynthesis O-methyltransferase (236 aa).

Arg-39, Gly-59, Asp-80, and Met-124 together coordinate S-adenosyl-L-methionine.

This sequence belongs to the methyltransferase superfamily. UbiG/COQ3 family.

It catalyses the reaction a 3-demethylubiquinol + S-adenosyl-L-methionine = a ubiquinol + S-adenosyl-L-homocysteine + H(+). It carries out the reaction a 3-(all-trans-polyprenyl)benzene-1,2-diol + S-adenosyl-L-methionine = a 2-methoxy-6-(all-trans-polyprenyl)phenol + S-adenosyl-L-homocysteine + H(+). It functions in the pathway cofactor biosynthesis; ubiquinone biosynthesis. Its function is as follows. O-methyltransferase that catalyzes the 2 O-methylation steps in the ubiquinone biosynthetic pathway. The polypeptide is Ubiquinone biosynthesis O-methyltransferase (Pseudoalteromonas translucida (strain TAC 125)).